The sequence spans 390 residues: tRNA(Met) cytidine acetate ligase (390 aa).

ATP is bound by residues 7–20, Gly101, Asn162, and Arg187; that span reads VVEY…HKLH.

It belongs to the TmcAL family.

It is found in the cytoplasm. The catalysed reaction is cytidine(34) in elongator tRNA(Met) + acetate + ATP = N(4)-acetylcytidine(34) in elongator tRNA(Met) + AMP + diphosphate. Its function is as follows. Catalyzes the formation of N(4)-acetylcytidine (ac(4)C) at the wobble position of elongator tRNA(Met), using acetate and ATP as substrates. First activates an acetate ion to form acetyladenylate (Ac-AMP) and then transfers the acetyl group to tRNA to form ac(4)C34. This Listeria monocytogenes serotype 4b (strain F2365) protein is tRNA(Met) cytidine acetate ligase.